The following is a 358-amino-acid chain: 3-dehydroquinate synthase (358 aa).

Residues 70–75, 104–108, 128–129, Lys141, and Lys150 contribute to the NAD(+) site; these read DGEAHK, GVIGD, and TT. Glu183, His246, and His263 together coordinate Zn(2+).

This sequence belongs to the sugar phosphate cyclases superfamily. Dehydroquinate synthase family. NAD(+) serves as cofactor. It depends on Co(2+) as a cofactor. The cofactor is Zn(2+).

The protein localises to the cytoplasm. It carries out the reaction 7-phospho-2-dehydro-3-deoxy-D-arabino-heptonate = 3-dehydroquinate + phosphate. Its pathway is metabolic intermediate biosynthesis; chorismate biosynthesis; chorismate from D-erythrose 4-phosphate and phosphoenolpyruvate: step 2/7. Functionally, catalyzes the conversion of 3-deoxy-D-arabino-heptulosonate 7-phosphate (DAHP) to dehydroquinate (DHQ). The protein is 3-dehydroquinate synthase of Bordetella bronchiseptica (strain ATCC BAA-588 / NCTC 13252 / RB50) (Alcaligenes bronchisepticus).